The sequence spans 25 residues: Fructokinase-1 (25 aa).

The protein belongs to the ROK (NagC/XylR) family. As to quaternary structure, homodimer. The cofactor is Mg(2+).

The catalysed reaction is D-fructose + ATP = D-fructose 6-phosphate + ADP + H(+). With respect to regulation, inhibition by zinc ions (Potential). Inactivated by EDTA. In Lactococcus lactis subsp. lactis (Streptococcus lactis), this protein is Fructokinase-1.